A 373-amino-acid polypeptide reads, in one-letter code: Gibberellin 3-beta-dioxygenase 2 (373 aa).

In terms of domain architecture, Fe2OG dioxygenase spans 203–304 (MTATVHLNWY…RVSLGYFLGP (102 aa)). Position 212 (Tyr-212) interacts with 2-oxoglutarate. Fe cation-binding residues include His-227, Asp-229, and His-285. Arg-295 and Ser-297 together coordinate 2-oxoglutarate.

Belongs to the iron/ascorbate-dependent oxidoreductase family. The cofactor is L-ascorbate. Fe(2+) serves as cofactor. Highly expressed in elongating leaves. Expressed in unopened flowers. Expressed at low levels in leaf blades, shoots, rachis, stems and young panicles.

The enzyme catalyses gibberellin A20 + 2-oxoglutarate + O2 = gibberellin A1 + succinate + CO2. Its pathway is plant hormone biosynthesis; gibberellin biosynthesis. In terms of biological role, catalyzes the 3-beta-hydroxylation of the inactive gibberellin precursors, leading to the formation of bioactive gibberellins. In vitro, converts the precursors GA20, GA5, GA44 and GA9 to the corresponding 3-beta-hydroxylated active products GA1, GA3, GA38 and GA4, respectively. Involved in the production of bioactive GA for vegetative growth and development. Controls the elongation of the vegetative shoot and plant height by the regulation of active gibberellin levels. This chain is Gibberellin 3-beta-dioxygenase 2, found in Oryza sativa subsp. japonica (Rice).